Here is a 201-residue protein sequence, read N- to C-terminus: MSSDGMNRDVSNSKPNVRFAAPQRLSVAHPAISSPLHMPMSKSSRKPLVRTKIRLDPGHSALDWHSLTSNPANYYTKFVSLQLIQDLLDDPVFQKDNFKFSPSQLKNQLLVQKIPLYKIMPPLRINRKIVKKHCKGEDELWCVINGKVYDISSYLKFHPGGTDILIKHRNSDDLITYFNKYHQWVNYEKLLQVCFIGVVCE.

The Cytochrome b5 heme-binding domain occupies 122–200 (PLRINRKIVK…LQVCFIGVVC (79 aa)). Residues His-158 and His-182 each coordinate heme.

The protein belongs to the cytochrome b5 family.

Its function is as follows. Involved in resistance to carboplatin and cisplatin. Is probably involved in a pathway contributing to genomic integrity. In Saccharomyces cerevisiae (strain ATCC 204508 / S288c) (Baker's yeast), this protein is Increased recombination centers protein 21 (IRC21).